A 1451-amino-acid chain; its full sequence is Dicer-like protein 2 (1451 aa).

The interval 34 to 53 is disordered; that stretch reads YDGHLSEEDSPGGKPRPKEQ. The Helicase ATP-binding domain maps to 70 to 247; the sequence is MLEASLKENI…LKRLESTLDA (178 aa). 83–90 contributes to the ATP binding site; sequence MDTGSGKT. The short motif at 190 to 193 is the DEAH box element; it reads DEAH. The Helicase C-terminal domain occupies 412-582; the sequence is KVQRIIEVLL…RLEAIENSEA (171 aa). A Dicer dsRNA-binding fold domain is found at 603–704; it reads AKSHLQHFVS…LPLRDRLELE (102 aa). RNase III domains are found at residues 968-1111 and 1153-1351; these read AAEL…VDGG and LQLL…VDAG. A Mg(2+)-binding site is contributed by glutamate 1192. The tract at residues 1253-1272 is disordered; it reads EGDSDSKSSGDSTSDKASPR. Positions 1337 and 1340 each coordinate Mg(2+).

It belongs to the helicase family. Dicer subfamily. The cofactor is Mg(2+). Requires Mn(2+) as cofactor.

Its function is as follows. Dicer-like endonuclease involved in cleaving double-stranded RNA in the RNA interference (RNAi) pathway. Produces 21 to 25 bp dsRNAs (siRNAs) which target the selective destruction of homologous RNAs leading to sequence-specific suppression of gene expression, called post-transcriptional gene silencing (PTGS). Part of a broad host defense, DCL-2 is involved in antiviral defense against mycoviruses like the hypovirus CHV1-EP713 and the reovirus MyRV1-Cp9B21. The sequence is that of Dicer-like protein 2 (DCL-2) from Cryphonectria parasitica (Chestnut blight fungus).